The sequence spans 55 residues: Small ribosomal subunit protein eS31 (55 aa).

Zn(2+)-binding residues include cysteine 26, cysteine 29, cysteine 44, and cysteine 47.

Belongs to the eukaryotic ribosomal protein eS31 family. In terms of assembly, part of the 30S ribosomal subunit. Zn(2+) is required as a cofactor.

The sequence is that of Small ribosomal subunit protein eS31 from Archaeoglobus fulgidus (strain ATCC 49558 / DSM 4304 / JCM 9628 / NBRC 100126 / VC-16).